The sequence spans 228 residues: uncharacterized protein (228 aa).

This is an uncharacterized protein from Mycobacterium tuberculosis (strain CDC 1551 / Oshkosh).